Consider the following 356-residue polypeptide: Beta-hexosaminidase (356 aa).

Substrate is bound by residues D75, R83, R150, and 180–181; that span reads KH. H193 functions as the Proton donor/acceptor in the catalytic mechanism. D264 (nucleophile) is an active-site residue.

The protein belongs to the glycosyl hydrolase 3 family. NagZ subfamily.

The protein resides in the cytoplasm. It carries out the reaction Hydrolysis of terminal non-reducing N-acetyl-D-hexosamine residues in N-acetyl-beta-D-hexosaminides.. Its pathway is cell wall biogenesis; peptidoglycan recycling. In terms of biological role, plays a role in peptidoglycan recycling by cleaving the terminal beta-1,4-linked N-acetylglucosamine (GlcNAc) from peptide-linked peptidoglycan fragments, giving rise to free GlcNAc, anhydro-N-acetylmuramic acid and anhydro-N-acetylmuramic acid-linked peptides. In Aromatoleum aromaticum (strain DSM 19018 / LMG 30748 / EbN1) (Azoarcus sp. (strain EbN1)), this protein is Beta-hexosaminidase.